The chain runs to 388 residues: Lamin tail domain-containing protein 1 (388 aa).

The region spanning 136–254 (EVGQFTSSSL…QAIAWYTPIH (119 aa)) is the LTD domain. A disordered region spans residues 349 to 388 (EPHNTSTAGGRLDRQPRTRSTRPNRASGSKKKKTSESQKQ). Basic residues predominate over residues 365–381 (RTRSTRPNRASGSKKKK).

The protein belongs to the intermediate filament family.

The protein is Lamin tail domain-containing protein 1 (LMNTD1) of Homo sapiens (Human).